Here is a 293-residue protein sequence, read N- to C-terminus: Probable metal transport system membrane protein TC_0698 (293 aa).

Helical transmembrane passes span 18-38, 41-61, 68-88, 101-121, 142-162, 186-206, and 242-262; these read SLLA…YIVV, IVSI…IALW, LPIS…ICIG, IISM…SKLP, DLYF…ICHT, FLLL…MGVI, and FLGI…IAIL.

The protein belongs to the ABC-3 integral membrane protein family.

It localises to the cell inner membrane. Functionally, part of an ATP-driven transport system TC_0696/TC_0697/TC_0698 for a metal. The polypeptide is Probable metal transport system membrane protein TC_0698 (Chlamydia muridarum (strain MoPn / Nigg)).